The sequence spans 628 residues: MAELGELKHMVMSFRVSELQVLLGFAGRNKSGRKHELLAKALHLLKSSCAPSVQMKIKELYRRRFPRKTLGPSDLSLLSLPPGTSPVGSPGPLAPIPPTLLAPGTLLGPKREVDMHPPLPQPVHPDVTMKPLPFYEVYGELIRPTTLASTSSQRFEEAHFTFALTPQQVQQILTSREVLPGAKCDYTIQVQLRFCLCETSCPQEDYFPPNLFVKVNGKLCPLPGYLPPTKNGAEPKRPSRPINITPLARLSATVPNTIVVNWSSEFGRNYSLSVYLVRQLTAGTLLQKLRAKGIRNPDHSRALIKEKLTADPDSEVATTSLRVSLMCPLGKMRLTVPCRALTCAHLQSFDAALYLQMNEKKPTWTCPVCDKKAPYESLIIDGLFMEILSSCSDCDEIQFMEDGSWCPMKPKKEASEVCPPPGYGLDGLQYSPVQGGDPSENKKKVEVIDLTIESSSDEEDLPPTKKHCSVTSAAIPALPGSKGVLTSGHQPSSVLRSPAMGTLGGDFLSSLPLHEYPPAFPLGADIQGLDLFSFLQTESQHYGPSVITSLDEQDALGHFFQYRGTPSHFLGPLAPTLGSSHCSATPAPPPGRVSSIVAPGGALREGHGGPLPSGPSLTGCRSDIISLD.

The tract at residues 1–200 is interaction with CCAR2; that stretch reads MAELGELKHM…QLRFCLCETS (200 aa). Residues 11 to 45 enclose the SAP domain; sequence VMSFRVSELQVLLGFAGRNKSGRKHELLAKALHLL. The LXXLL motif motif lies at 19-23; sequence LQVLL. Glycyl lysine isopeptide (Lys-Gly) (interchain with G-Cter in SUMO2) cross-links involve residues Lys46, Lys56, Lys230, and Lys307. The PINIT domain occupies 115 to 280; it reads MHPPLPQPVH…SLSVYLVRQL (166 aa). An SP-RING-type zinc finger spans residues 312–393; the sequence is PDSEVATTSL…FMEILSSCSD (82 aa). Zn(2+)-binding residues include Cys343, His345, Cys366, and Cys369. The tract at residues 450 to 460 is SUMO1-binding; it reads LTIESSSDEED. Residues Lys466 and Lys482 each participate in a glycyl lysine isopeptide (Lys-Gly) (interchain with G-Cter in SUMO2) cross-link. A disordered region spans residues 597–617; that stretch reads VAPGGALREGHGGPLPSGPSL.

It belongs to the PIAS family. Monomer. Binds SUMO1 and UBE2I. Interacts with BCL11A, HMGA2, IRF1, MITF and NCOA2. Interacts with STAT5; the interaction occurs on stimulation by PRL. Interacts with GFI1; the interaction relieves the inhibitory effect of PIAS3 on STAT3-mediated transcriptional activity. Interacts with AR, PLAG1 and ZFHX3. Interacts with STAT3; the interaction occurs on stimulation by IL6, CNTF or OSM and inhibits the DNA binding activity of STAT3. Interacts with MTA1. Interacts with CCAR2 (via N-terminus). Interacts with TRIM8. Interacts with PRDM1/Blimp-1. Post-translationally, sumoylated. In terms of tissue distribution, widely expressed.

It is found in the cytoplasm. The protein resides in the nucleus. Its subcellular location is the nucleus speckle. The protein operates within protein modification; protein sumoylation. Its function is as follows. Functions as an E3-type small ubiquitin-like modifier (SUMO) ligase, stabilizing the interaction between UBE2I and the substrate, and as a SUMO-tethering factor. Plays a crucial role as a transcriptional coregulation in various cellular pathways, including the STAT pathway and the steroid hormone signaling pathway. Involved in regulating STAT3 signaling via inhibiting STAT3 DNA-binding and suppressing cell growth. Enhances the sumoylation of MTA1 and may participate in its paralog-selective sumoylation. Sumoylates CCAR2 which promotes its interaction with SIRT1. Diminishes the sumoylation of ZFHX3 by preventing the colocalization of ZFHX3 with SUMO1 in the nucleus. The protein is E3 SUMO-protein ligase PIAS3 (PIAS3) of Homo sapiens (Human).